Here is a 47-residue protein sequence, read N- to C-terminus: PhoP/PhoQ regulator MgrB (47 aa).

A helical membrane pass occupies residues 6–26 (WVVLGIVVVVCLLLWAQVFNI).

The protein belongs to the MgrB family. In terms of assembly, may form homooligomers. Probably interacts with the periplasmic domain of PhoQ.

It localises to the cell inner membrane. Functionally, phoP-regulated transcription is redox-sensitive, being activated when the periplasm becomes more reducing. MgrB acts between DsbA/DsbB and PhoP/PhoQ in this pathway. Represses PhoP/PhoQ signaling, possibly by binding to the periplasmic domain of PhoQ, altering its activity and that of downstream effector PhoP. In Salmonella gallinarum (strain 287/91 / NCTC 13346), this protein is PhoP/PhoQ regulator MgrB.